We begin with the raw amino-acid sequence, 154 residues long: Large ribosomal subunit protein uL13 (154 aa).

The protein belongs to the universal ribosomal protein uL13 family. As to quaternary structure, part of the 50S ribosomal subunit.

In terms of biological role, this protein is one of the early assembly proteins of the 50S ribosomal subunit, although it is not seen to bind rRNA by itself. It is important during the early stages of 50S assembly. The sequence is that of Large ribosomal subunit protein uL13 from Agrobacterium fabrum (strain C58 / ATCC 33970) (Agrobacterium tumefaciens (strain C58)).